Here is a 419-residue protein sequence, read N- to C-terminus: UDP-N-acetylglucosamine 1-carboxyvinyltransferase (419 aa).

22 to 23 (KN) is a phosphoenolpyruvate binding site. Arg-95 is a UDP-N-acetyl-alpha-D-glucosamine binding site. Cys-119 serves as the catalytic Proton donor. A 2-(S-cysteinyl)pyruvic acid O-phosphothioketal modification is found at Cys-119. UDP-N-acetyl-alpha-D-glucosamine-binding positions include 164–167 (KVSV), Asp-308, and Ile-330.

This sequence belongs to the EPSP synthase family. MurA subfamily.

The protein localises to the cytoplasm. It catalyses the reaction phosphoenolpyruvate + UDP-N-acetyl-alpha-D-glucosamine = UDP-N-acetyl-3-O-(1-carboxyvinyl)-alpha-D-glucosamine + phosphate. The protein operates within cell wall biogenesis; peptidoglycan biosynthesis. Cell wall formation. Adds enolpyruvyl to UDP-N-acetylglucosamine. This chain is UDP-N-acetylglucosamine 1-carboxyvinyltransferase, found in Rickettsia peacockii (strain Rustic).